The chain runs to 485 residues: Metalloprotease AprA (485 aa).

Histidine 187 is a binding site for Zn(2+). Glutamate 188 is a catalytic residue. Zn(2+) contacts are provided by histidine 191 and histidine 197. Ca(2+) is bound by residues arginine 268, glycine 270, threonine 272, aspartate 300, glycine 302, glycine 303, aspartate 305, threonine 342, glutamate 344, glycine 349, glycine 351, aspartate 353, asparagine 358, leucine 360, asparagine 362, glycine 366, glycine 367, alanine 368, glycine 369, aspartate 371, glycine 375, glycine 376, glycine 377, glycine 378, aspartate 380, glycine 384, glycine 385, threonine 386, glycine 387, aspartate 389, aspartate 398, aspartate 405, aspartate 415, aspartate 461, threonine 463, asparagine 465, serine 467, and aspartate 469. Hemolysin-type calcium-binding repeat units follow at residues 347–364, 365–382, and 383–395; these read FGGS…ANVL, KGGA…ADQL, and WGGT…VFGA.

It belongs to the peptidase M10B family. Requires Ca(2+) as cofactor. It depends on Zn(2+) as a cofactor.

Its subcellular location is the secreted. Its function is as follows. Secreted protease which is important for P.entomophila to counteract the local immune response of Drosophila. Can degrade antimicrobial peptides (AMPs), e.g. Diptericin and Cecropin A. Thus, protects P.entomophila from the Drosophila antimicrobial peptides produced by the gut innate immune response, and promotes bacterial persistence in the Drosophila gut and killing of the host. Is responsible for maturation of pro-Monalysin to the active toxin Monalysin, by cleaving its N-terminus. This chain is Metalloprotease AprA, found in Pseudomonas entomophila (strain L48).